Reading from the N-terminus, the 335-residue chain is Phosphatidylinositol:ceramide inositolphosphotransferase (335 aa).

Over 1–21 the chain is Cytoplasmic; sequence MVLMGPHSALRLLPLKTQAIR. Residues 22–42 traverse the membrane as a helical segment; sequence FVLLLLLSVLILAVALLVTNA. Residues 43–72 lie on the Extracellular side of the membrane; sequence RMPDPKVVRPLPDIGFEVFPKVGWLEHLTD. A helical transmembrane segment spans residues 73–93; that stretch reads VCIFILNFLSLLVVFKLYLLH. At 94 to 98 the chain is on the cytoplasmic side; sequence RQNEG. The helical transmembrane segment at 99-119 threads the bilayer; sequence LDELQPFSCCPLIGKIIFGVW. Residues 120–139 lie on the Extracellular side of the membrane; the sequence is DSGRQSGIEKRDAHLIAWIR. A helical transmembrane segment spans residues 140–160; that stretch reads YFTTYFIVLLFRAIVVVMTSY. At 161–179 the chain is on the cytoplasmic side; sequence PATDNHCQNPMKITNPVKN. The chain crosses the membrane as a helical span at residues 180–200; that stretch reads VIMTLVTFGSGSIHCGDLMFS. Residues 201-203 are Extracellular-facing; it reads GHT. The active site involves His-202. A helical membrane pass occupies residues 204 to 224; sequence VSITLSLLVQWIYGSMLHWVF. Over 225-335 the chain is Cytoplasmic; that stretch reads RPASVLLVLL…GPACGNFGHW (111 aa). Active-site residues include His-245 and Asp-249.

Belongs to the sphingomyelin synthase family.

The protein resides in the membrane. Bidirectional lipid inositolphosphotransferase capable of converting phosphatidylinositol (PI) and ceramide to inositol-phosphorylceramide (IPC) and diacylglycerol (DAG) and vice versa. Direction is dependent on the relative concentrations of DAG and ceramide as phosphoinositol acceptors. Essential for viability of the pathogenic bloodstream stage of this human protozoan parasite and, consequently, can be considered as potential drug target. In Trypanosoma cruzi (strain CL Brener), this protein is Phosphatidylinositol:ceramide inositolphosphotransferase.